The chain runs to 122 residues: Fluoride-specific ion channel FluC (122 aa).

Helical transmembrane passes span 4 to 24 (ILLI…VSGI), 36 to 56 (LIVN…SLFG), 65 to 85 (FIIT…YESF), and 100 to 120 (ILLN…ASMF). Na(+) is bound by residues glycine 72 and threonine 75.

It belongs to the fluoride channel Fluc/FEX (TC 1.A.43) family.

The protein resides in the cell membrane. It catalyses the reaction fluoride(in) = fluoride(out). Na(+) is not transported, but it plays an essential structural role and its presence is essential for fluoride channel function. In terms of biological role, fluoride-specific ion channel. Important for reducing fluoride concentration in the cell, thus reducing its toxicity. The chain is Fluoride-specific ion channel FluC from Methanococcus maripaludis (strain DSM 14266 / JCM 13030 / NBRC 101832 / S2 / LL).